The sequence spans 97 residues: Aspartyl/glutamyl-tRNA(Asn/Gln) amidotransferase subunit C (97 aa).

Residues 74 to 84 show a composition bias toward low complexity; the sequence is TPEEATAAAPA. Residues 74–97 form a disordered region; sequence TPEEATAAAPAREGTAFKVPRIIE.

This sequence belongs to the GatC family. In terms of assembly, heterotrimer of A, B and C subunits.

It carries out the reaction L-glutamyl-tRNA(Gln) + L-glutamine + ATP + H2O = L-glutaminyl-tRNA(Gln) + L-glutamate + ADP + phosphate + H(+). The enzyme catalyses L-aspartyl-tRNA(Asn) + L-glutamine + ATP + H2O = L-asparaginyl-tRNA(Asn) + L-glutamate + ADP + phosphate + 2 H(+). In terms of biological role, allows the formation of correctly charged Asn-tRNA(Asn) or Gln-tRNA(Gln) through the transamidation of misacylated Asp-tRNA(Asn) or Glu-tRNA(Gln) in organisms which lack either or both of asparaginyl-tRNA or glutaminyl-tRNA synthetases. The reaction takes place in the presence of glutamine and ATP through an activated phospho-Asp-tRNA(Asn) or phospho-Glu-tRNA(Gln). The polypeptide is Aspartyl/glutamyl-tRNA(Asn/Gln) amidotransferase subunit C (Anaeromyxobacter dehalogenans (strain 2CP-1 / ATCC BAA-258)).